Here is a 181-residue protein sequence, read N- to C-terminus: Protein GrpE (181 aa).

The span at 1 to 13 shows a compositional bias: polar residues; it reads MENTQENPATQSA. Residues 1–34 are disordered; sequence MENTQENPATQSAEDIGSAKQAAQGAAPAAEAAD. A compositionally biased stretch (low complexity) spans 19–34; the sequence is AKQAAQGAAPAAEAAD.

This sequence belongs to the GrpE family. In terms of assembly, homodimer.

It localises to the cytoplasm. Participates actively in the response to hyperosmotic and heat shock by preventing the aggregation of stress-denatured proteins, in association with DnaK and GrpE. It is the nucleotide exchange factor for DnaK and may function as a thermosensor. Unfolded proteins bind initially to DnaJ; upon interaction with the DnaJ-bound protein, DnaK hydrolyzes its bound ATP, resulting in the formation of a stable complex. GrpE releases ADP from DnaK; ATP binding to DnaK triggers the release of the substrate protein, thus completing the reaction cycle. Several rounds of ATP-dependent interactions between DnaJ, DnaK and GrpE are required for fully efficient folding. The protein is Protein GrpE of Burkholderia vietnamiensis (strain G4 / LMG 22486) (Burkholderia cepacia (strain R1808)).